A 174-amino-acid polypeptide reads, in one-letter code: Transcriptional repressor NrdR (174 aa).

The segment at 3 to 34 (CPFCQHNDTRVIDSRVSEDGTTIRRRRECEAC) is a zinc-finger region. The region spanning 49–139 (PTVVKSDGGR…VYRSFQDVAD (91 aa)) is the ATP-cone domain.

It belongs to the NrdR family. Requires Zn(2+) as cofactor.

Functionally, negatively regulates transcription of bacterial ribonucleotide reductase nrd genes and operons by binding to NrdR-boxes. This chain is Transcriptional repressor NrdR, found in Xanthomonas campestris pv. campestris (strain 8004).